The sequence spans 329 residues: Short-chain dehydrogenase/reductase tropG (329 aa).

NADP(+) is bound by residues Lys57, Asp86, Asn113, Tyr203, and Lys207. Tyr203 acts as the Proton acceptor in catalysis. The Lowers pKa of active site Tyr role is filled by Lys207.

It belongs to the short-chain dehydrogenases/reductases (SDR) family.

It participates in secondary metabolite biosynthesis. In terms of biological role, short-chain dehydrogenase/reductase; part of the gene cluster that mediates the biosynthesis of the tropolone class of fungal maleic anhydrides. The pathway begins with the synthesis of 3-methylorcinaldehyde by the non-reducing polyketide synthase (PKS) tropA. 3-methylorcinaldehyde is the substrate for the FAD-dependent monooxygenase tropB to yield a dearomatized hydroxycyclohexadione. The 2-oxoglutarate-dependent dioxygenase tropC then performs the oxidative ring expansion to provide the first tropolone metabolite stipitaldehyde. Trop D converts stipitaldehyde into stipitacetal which is in turn converted to stipitalide by the short-chain dehydrogenase/reductase tropE. The next steps involve tropF, tropG, tropH, tropI and tropJ to form successive tropolone maleic anhydrides including stipitaldehydic, stipitatonic and stipitatic acids. The chain is Short-chain dehydrogenase/reductase tropG from Talaromyces stipitatus (strain ATCC 10500 / CBS 375.48 / QM 6759 / NRRL 1006) (Penicillium stipitatum).